A 178-amino-acid chain; its full sequence is Female-specific protein transformer (178 aa).

2 stretches are compositionally biased toward basic and acidic residues: residues 1 to 18 and 25 to 40; these read MKMD…DSHG and RERE…DSKK. The disordered stretch occupies residues 1–117; sequence MKMDADSSCG…RRYNPPPKII (117 aa). 2 stretches are compositionally biased toward basic residues: residues 59 to 73 and 81 to 108; these read RRLR…RRSA and RRHR…RSPR.

It localises to the nucleus speckle. In terms of biological role, member of the regulatory pathway controlling female somatic sexual differentiation, regulated by Sxl. Activates dsx female-specific splicing by promoting the formation of a splicing enhancer complex which consists of tra, tra2 and sr proteins. The polypeptide is Female-specific protein transformer (tra) (Drosophila erecta (Fruit fly)).